The following is a 226-amino-acid chain: Cytidylate kinase (226 aa).

12–20 is an ATP binding site; that stretch reads GPSGAGKGT.

This sequence belongs to the cytidylate kinase family. Type 1 subfamily.

The protein localises to the cytoplasm. The enzyme catalyses CMP + ATP = CDP + ADP. The catalysed reaction is dCMP + ATP = dCDP + ADP. The protein is Cytidylate kinase of Vibrio vulnificus (strain CMCP6).